A 158-amino-acid chain; its full sequence is SsrA-binding protein (158 aa).

This sequence belongs to the SmpB family.

The protein resides in the cytoplasm. In terms of biological role, required for rescue of stalled ribosomes mediated by trans-translation. Binds to transfer-messenger RNA (tmRNA), required for stable association of tmRNA with ribosomes. tmRNA and SmpB together mimic tRNA shape, replacing the anticodon stem-loop with SmpB. tmRNA is encoded by the ssrA gene; the 2 termini fold to resemble tRNA(Ala) and it encodes a 'tag peptide', a short internal open reading frame. During trans-translation Ala-aminoacylated tmRNA acts like a tRNA, entering the A-site of stalled ribosomes, displacing the stalled mRNA. The ribosome then switches to translate the ORF on the tmRNA; the nascent peptide is terminated with the 'tag peptide' encoded by the tmRNA and targeted for degradation. The ribosome is freed to recommence translation, which seems to be the essential function of trans-translation. The chain is SsrA-binding protein from Pseudoalteromonas atlantica (strain T6c / ATCC BAA-1087).